A 703-amino-acid polypeptide reads, in one-letter code: Polyribonucleotide nucleotidyltransferase (703 aa).

Residues Asp-485 and Asp-491 each coordinate Mg(2+). The KH domain maps to 552–611; sequence PRIYTLKIDQDKIRDVIGKGGAMIRSITEASDTNIEIEDDGTIKIFATERAKADIAISKI. One can recognise an S1 motif domain in the interval 621–689; the sequence is GKTYEGKVTR…RQNRVRLSIK (69 aa).

The protein belongs to the polyribonucleotide nucleotidyltransferase family. In terms of assembly, component of the RNA degradosome, which is a multiprotein complex involved in RNA processing and mRNA degradation. Mg(2+) is required as a cofactor.

The protein localises to the cytoplasm. The enzyme catalyses RNA(n+1) + phosphate = RNA(n) + a ribonucleoside 5'-diphosphate. Functionally, involved in mRNA degradation. Catalyzes the phosphorolysis of single-stranded polyribonucleotides processively in the 3'- to 5'-direction. The polypeptide is Polyribonucleotide nucleotidyltransferase (Pseudoalteromonas atlantica (strain T6c / ATCC BAA-1087)).